The chain runs to 372 residues: 4-hydroxy-3-methylbut-2-en-1-yl diphosphate synthase (flavodoxin) (372 aa).

Cys270, Cys273, Cys305, and Glu312 together coordinate [4Fe-4S] cluster.

This sequence belongs to the IspG family. [4Fe-4S] cluster is required as a cofactor.

It catalyses the reaction (2E)-4-hydroxy-3-methylbut-2-enyl diphosphate + oxidized [flavodoxin] + H2O + 2 H(+) = 2-C-methyl-D-erythritol 2,4-cyclic diphosphate + reduced [flavodoxin]. It participates in isoprenoid biosynthesis; isopentenyl diphosphate biosynthesis via DXP pathway; isopentenyl diphosphate from 1-deoxy-D-xylulose 5-phosphate: step 5/6. Functionally, converts 2C-methyl-D-erythritol 2,4-cyclodiphosphate (ME-2,4cPP) into 1-hydroxy-2-methyl-2-(E)-butenyl 4-diphosphate. This Escherichia coli O8 (strain IAI1) protein is 4-hydroxy-3-methylbut-2-en-1-yl diphosphate synthase (flavodoxin).